The primary structure comprises 291 residues: Segregation and condensation protein B (291 aa).

This sequence belongs to the ScpB family. As to quaternary structure, homodimer. Homodimerization may be required to stabilize the binding of ScpA to the Smc head domains. Component of a cohesin-like complex composed of ScpA, ScpB and the Smc homodimer, in which ScpA and ScpB bind to the head domain of Smc. The presence of the three proteins is required for the association of the complex with DNA.

Its subcellular location is the cytoplasm. Its function is as follows. Participates in chromosomal partition during cell division. May act via the formation of a condensin-like complex containing Smc and ScpA that pull DNA away from mid-cell into both cell halves. This Mycoplasmoides gallisepticum (strain R(low / passage 15 / clone 2)) (Mycoplasma gallisepticum) protein is Segregation and condensation protein B.